A 1434-amino-acid polypeptide reads, in one-letter code: Probable ATP-dependent RNA helicase spindle-E (1434 aa).

A Helicase ATP-binding domain is found at 125 to 292; the sequence is LAAINAHPVV…FTTTNSIPPV (168 aa). 138 to 145 is a binding site for ATP; it reads GETGCGKT. The DEAH box motif lies at 238-241; that stretch reads DEVH. A Helicase C-terminal domain is found at 354–526; the sequence is QSRQSYDEAL…NSVLKAKVLN (173 aa). In terms of domain architecture, Tudor spans 938–1001; that stretch reads ASAIAKGMMV…RLMPRELTEQ (64 aa).

It belongs to the DEAD box helicase family. DEAH subfamily.

It is found in the cytoplasm. Its subcellular location is the perinuclear region. The protein resides in the cytoplasmic ribonucleoprotein granule. It carries out the reaction ATP + H2O = ADP + phosphate + H(+). In terms of biological role, probable ATP-binding RNA helicase which plays a central role during spermatogenesis and oogenesis by repressing transposable elements and preventing their mobilization, which is essential for the germline integrity. Acts via the piRNA metabolic process, which mediates the repression of transposable elements during meiosis by forming complexes composed of piRNAs and Piwi and govern the methylation and subsequent repression of transposons. Involved in the repression of LTR retrotransposon copia. Also involved in telomere regulation by repressing specialized telomeric retroelements HeT-A, TAHRE, and TART; Drosophila telomeres being maintained by transposition of specialized telomeric retroelements. Involved in telomeric trans-silencing, a repression mechanism by which a transposon or a transgene inserted in subtelomeric heterochromatin has the capacity to repress in trans in the female germline, a homologous transposon, or transgene located in euchromatin. Involved in the repression of testis-expressed Stellate genes by the homologous Su(Ste) repeats. Required for anteroposterior and dorsoventral axis formation during oogenesis. Key component of the perinuclear meiotic nuage, an electron dense structure involved in the post-transcriptional regulation of transposons and mRNAs; required for recruitment of other nuage comonents including vas, krimp, aub and mael. May have a role in production of piwi-interacting RNA (piRNA). The polypeptide is Probable ATP-dependent RNA helicase spindle-E (Drosophila melanogaster (Fruit fly)).